The following is a 432-amino-acid chain: Asparagine--tRNA ligase (432 aa).

The protein belongs to the class-II aminoacyl-tRNA synthetase family. In terms of assembly, homodimer.

It is found in the cytoplasm. The enzyme catalyses tRNA(Asn) + L-asparagine + ATP = L-asparaginyl-tRNA(Asn) + AMP + diphosphate + H(+). This is Asparagine--tRNA ligase from Limosilactobacillus reuteri (strain DSM 20016) (Lactobacillus reuteri).